We begin with the raw amino-acid sequence, 533 residues long: MTLTQQDASTVEKLDETLHEDRILILDFGSQVTQLIARRVRESGVYCEIWPFTATEEKIRAFNPRGIILSGSPASVHDENAPPIPNVVFALNRPVLGICYGQQAMCQMLGGKVESHEHREFGRAYIDIAEDCSLFRGVWARGKREQVWMSHGDRVTQLPPGFRAVAHSEGAPFAIIADEGRRLYGVQFHPEVVHTPHGAALIRNFTHNVAGCSGTWTMAGFRELEIARIRKQVGSGRVICGLSGGVDSSVAAKLIHDAIGDQLTCIFVDPGIMRTGEADEVVKTFRGRFNIRLVHRDASELFLKELAGVTDPETKRKTIGRLFIEVFEEEAAKLGGAQFLAQGTLYPDVIESVSFSGGPSVTIKSHHNVGGLPDRMNMELVEPLRELFKDEVRMLGRELGIPESIVGRHPFPGPGLAIRIPGDVTKEKLDLLRKVDAIYLEEIRRAGLYDAIWQAFAVLLPVRTVGVMGDGRTYDQACALRAVTSTDGMTAEVYPFDFAFLNRVAGRIVNEVRGINRVTYDITSKPPGTIEWE.

In terms of domain architecture, Glutamine amidotransferase type-1 spans R22–T215. C99 serves as the catalytic Nucleophile. Catalysis depends on residues H189 and E191. One can recognise a GMPS ATP-PPase domain in the interval W216–R408. S243–S249 contacts ATP.

In terms of assembly, homodimer.

It carries out the reaction XMP + L-glutamine + ATP + H2O = GMP + L-glutamate + AMP + diphosphate + 2 H(+). The protein operates within purine metabolism; GMP biosynthesis; GMP from XMP (L-Gln route): step 1/1. Its function is as follows. Catalyzes the synthesis of GMP from XMP. The chain is GMP synthase [glutamine-hydrolyzing] from Gluconobacter oxydans (strain 621H) (Gluconobacter suboxydans).